Reading from the N-terminus, the 198-residue chain is Nucleoid occlusion factor SlmA (198 aa).

One can recognise an HTH tetR-type domain in the interval 9–70 (RNRREEILQA…SLIEFIEDSL (62 aa)). Residues 33 to 52 (TTAKLAANVGVSEAALYRHF) constitute a DNA-binding region (H-T-H motif). The stretch at 113 to 144 (ALMFEQDRLQDRINQLFERIESQLRQVLREHK) forms a coiled coil.

Belongs to the nucleoid occlusion factor SlmA family. In terms of assembly, homodimer. Interacts with FtsZ.

The protein resides in the cytoplasm. The protein localises to the nucleoid. In terms of biological role, required for nucleoid occlusion (NO) phenomenon, which prevents Z-ring formation and cell division over the nucleoid. Acts as a DNA-associated cell division inhibitor that binds simultaneously chromosomal DNA and FtsZ, and disrupts the assembly of FtsZ polymers. SlmA-DNA-binding sequences (SBS) are dispersed on non-Ter regions of the chromosome, preventing FtsZ polymerization at these regions. In Pectobacterium carotovorum subsp. carotovorum (strain PC1), this protein is Nucleoid occlusion factor SlmA.